A 68-amino-acid polypeptide reads, in one-letter code: Tabimmunregulin 1 (68 aa).

The N-terminal stretch at 1–26 (MLLKSYVFFLLSLLIVGLFTSRDADA) is a signal peptide. Positions 27 to 38 (QYEDLVTGYLRK) are excised as a propeptide.

As to expression, expressed in salivary glands.

It localises to the secreted. Functionally, horsefly salivary gland immunosuppressant protein that likely inhibits the host inflammatory response by regulation of anti- and pro-inflammatory cytokines. When tested on mouse splenocytes in the presence of LPS, it increases the secretion of the proinflammatory cytokine interleukin-10 (IL10) and decreases the secretion of the proinflammatory cytokine interferon-gamma (IFNG) in a dose-dependent manner. This is Tabimmunregulin 1 from Tabanus yao (Horsefly).